A 198-amino-acid polypeptide reads, in one-letter code: Undecaprenyl phosphate transporter A (198 aa).

The next 5 helical transmembrane spans lie at 15-35, 47-67, 107-127, 135-155, and 169-189; these read MGYA…EIVL, IGFI…QIFI, VVFS…PAGI, FVVL…YLGI, and GTYT…YFVI.

Belongs to the DedA family.

The protein resides in the cell membrane. Flippase that catalyzes the transport of undecaprenyl phosphate (UndP) across the cytoplasmic membrane, from the external side to the cytoplasmic side. Is involved in UndP recycling during peptidoglycan synthesis. In Bacillus subtilis (strain 168), this protein is Undecaprenyl phosphate transporter A.